Reading from the N-terminus, the 682-residue chain is Methionine--tRNA ligase (682 aa).

The 'HIGH' region signature appears at 14–24 (PYANGSIHLGH). 4 residues coordinate Zn(2+): Cys145, Cys148, Cys158, and Cys161. Residues 331–335 (KMSKS) carry the 'KMSKS' region motif. Lys334 lines the ATP pocket. A tRNA-binding domain is found at 580–682 (AFAAVDLRVA…SGAKPGQRIK (103 aa)).

The protein belongs to the class-I aminoacyl-tRNA synthetase family. MetG type 1 subfamily. In terms of assembly, homodimer. Zn(2+) serves as cofactor.

It localises to the cytoplasm. It catalyses the reaction tRNA(Met) + L-methionine + ATP = L-methionyl-tRNA(Met) + AMP + diphosphate. In terms of biological role, is required not only for elongation of protein synthesis but also for the initiation of all mRNA translation through initiator tRNA(fMet) aminoacylation. In Pseudomonas savastanoi pv. phaseolicola (strain 1448A / Race 6) (Pseudomonas syringae pv. phaseolicola (strain 1448A / Race 6)), this protein is Methionine--tRNA ligase.